Reading from the N-terminus, the 643-residue chain is Leukocyte immunoglobulin-like receptor subfamily B member 5 (643 aa).

The N-terminal stretch at 1 to 23 (MTLTLSVLICLGLNVGPRTCVQA) is a signal peptide. At 24–458 (GTLPKPTLWA…PQSGLGRHLG (435 aa)) the chain is on the extracellular side. 4 consecutive Ig-like C2-type domains span residues 27-116 (PKPT…LELV), 111-228 (DPLE…SLLI), 224-313 (PSLL…DPLD), and 337-418 (GENV…LVVS). Cysteines 49 and 98 form a disulfide. An N-linked (GlcNAc...) asparagine glycan is attached at Asn139. Cystine bridges form between Cys144–Cys195 and Cys244–Cys295. N-linked (GlcNAc...) asparagine glycosylation is found at Asn279 and Asn339. Cys344 and Cys395 are disulfide-bonded. Positions 417-433 (VSGPSGDPSLSPTGSTP) are enriched in low complexity. A disordered region spans residues 417–449 (VSGPSGDPSLSPTGSTPTPGPEDQPLTPTGLDP). The helical transmembrane segment at 459–479 (VVTGVSVAFVLLLFLLLFLLL) threads the bilayer. Over 480–643 (RHRHQSKHRT…PSIYAPLAIH (164 aa)) the chain is Cytoplasmic. The segment at 493–643 (FYRPAGAAGP…PSIYAPLAIH (151 aa)) is disordered. At Ser514 the chain carries Phosphoserine. 3 stretches are compositionally biased toward basic and acidic residues: residues 531 to 549 (TQPK…RDED), 557 to 567 (EVKHSRPRREM), and 579 to 592 (LDTK…DRQM). The ITIM motif 1 signature appears at 605 to 610 (VTYAQL). Basic and acidic residues predominate over residues 615–631 (LRREATEPPPSQEREPP). Positions 635-640 (SIYAPL) match the ITIM motif 2 motif.

Its subcellular location is the membrane. May act as receptor for class I MHC antigens. The polypeptide is Leukocyte immunoglobulin-like receptor subfamily B member 5 (LILRB5) (Pan troglodytes (Chimpanzee)).